The following is a 329-amino-acid chain: DNA-directed RNA polymerase subunit alpha (329 aa).

The segment at 1-234 (MQGSVTEFLK…EQLDAFVELR (234 aa)) is alpha N-terminal domain (alpha-NTD). The interval 248–329 (FDPILLRPVD…WPPASLVDDL (82 aa)) is alpha C-terminal domain (alpha-CTD).

This sequence belongs to the RNA polymerase alpha chain family. In terms of assembly, homodimer. The RNAP catalytic core consists of 2 alpha, 1 beta, 1 beta' and 1 omega subunit. When a sigma factor is associated with the core the holoenzyme is formed, which can initiate transcription.

The enzyme catalyses RNA(n) + a ribonucleoside 5'-triphosphate = RNA(n+1) + diphosphate. Functionally, DNA-dependent RNA polymerase catalyzes the transcription of DNA into RNA using the four ribonucleoside triphosphates as substrates. The protein is DNA-directed RNA polymerase subunit alpha of Shewanella denitrificans (strain OS217 / ATCC BAA-1090 / DSM 15013).